The sequence spans 705 residues: Elongation factor G (705 aa).

In terms of domain architecture, tr-type G spans 8 to 291 (EKVRNIGIMA…AVVEYLPSPI (284 aa)). Residues 17-24 (AHIDAGKT), 90-94 (DTPGH), and 144-147 (NKMD) each bind GTP.

The protein belongs to the TRAFAC class translation factor GTPase superfamily. Classic translation factor GTPase family. EF-G/EF-2 subfamily.

It is found in the cytoplasm. In terms of biological role, catalyzes the GTP-dependent ribosomal translocation step during translation elongation. During this step, the ribosome changes from the pre-translocational (PRE) to the post-translocational (POST) state as the newly formed A-site-bound peptidyl-tRNA and P-site-bound deacylated tRNA move to the P and E sites, respectively. Catalyzes the coordinated movement of the two tRNA molecules, the mRNA and conformational changes in the ribosome. This is Elongation factor G from Chloroherpeton thalassium (strain ATCC 35110 / GB-78).